The primary structure comprises 406 residues: Phosphopentomutase (406 aa).

The Mn(2+) site is built by D10, D305, H310, D346, H347, and H358.

Belongs to the phosphopentomutase family. The cofactor is Mn(2+).

Its subcellular location is the cytoplasm. It catalyses the reaction 2-deoxy-alpha-D-ribose 1-phosphate = 2-deoxy-D-ribose 5-phosphate. The catalysed reaction is alpha-D-ribose 1-phosphate = D-ribose 5-phosphate. Its pathway is carbohydrate degradation; 2-deoxy-D-ribose 1-phosphate degradation; D-glyceraldehyde 3-phosphate and acetaldehyde from 2-deoxy-alpha-D-ribose 1-phosphate: step 1/2. Functionally, isomerase that catalyzes the conversion of deoxy-ribose 1-phosphate (dRib-1-P) and ribose 1-phosphate (Rib-1-P) to deoxy-ribose 5-phosphate (dRib-5-P) and ribose 5-phosphate (Rib-5-P), respectively. This Sinorhizobium medicae (strain WSM419) (Ensifer medicae) protein is Phosphopentomutase.